The following is a 2226-amino-acid chain: Rotatin (2226 aa).

The disordered stretch occupies residues 295 to 345 (ARGTHHSQNPSPGSSSPRPSVVGRTGQRPRGDGQDWDAASSSGSSSHAHVN). Low complexity-rich tracts occupy residues 304-318 (PSPG…VVGR) and 332-343 (AASSSGSSSHAH). Ser-310 is subject to Phosphoserine. At Lys-811 the chain carries N6-acetyllysine. Residues 1534–1554 (SRTSQDRDPSSLSTSETTVAP) form a disordered region. The span at 1543–1554 (SSLSTSETTVAP) shows a compositional bias: polar residues.

The protein belongs to the rotatin family. As to quaternary structure, interacts with PPP1R35; this interaction allows the mutual recruitment to the centriole.

The protein resides in the cytoplasm. It is found in the cytoskeleton. Its subcellular location is the cilium basal body. The protein localises to the microtubule organizing center. It localises to the centrosome. Involved in the genetic cascade that governs left-right specification. Plays a role in the maintenance of a normal ciliary structure. Required for correct asymmetric expression of NODAL, LEFTY and PITX2. In Homo sapiens (Human), this protein is Rotatin.